Reading from the N-terminus, the 1001-residue chain is Serine/threonine-protein kinase TAO1 (1001 aa).

S9 carries the post-translational modification Phosphoserine. Positions 28 to 281 (FTDLREIGHG…SEELLKHMFV (254 aa)) constitute a Protein kinase domain. ATP is bound by residues 34–42 (IGHGSFGAV) and K57. The active-site Proton acceptor is D151. 2 disordered regions span residues 324 to 380 (PAVE…DKSE) and 404 to 431 (ENYQ…HKSH). Positions 350–370 (SNQSIPSMSISASSQSSSVNS) are enriched in low complexity. Phosphoserine occurs at positions 421 and 445. Residues 458-651 (SELREQMSGY…QTQKDLEHAM (194 aa)) are a coiled coil. Residues 567–587 (KEELNENQSTPKKEKQEWLSK) form a disordered region. Over residues 577–587 (PKKEKQEWLSK) the composition is skewed to basic and acidic residues. T669 is subject to Phosphothreonine. The stretch at 754 to 877 (KAVLKRLKEE…LERQAREIEA (124 aa)) forms a coiled coil. A disordered region spans residues 905–1001 (PGASSWSHNP…ISNGSHMSYT (97 aa)). Residues 906–915 (GASSWSHNPT) are compositionally biased toward polar residues. S965 is subject to Phosphoserine. A compositionally biased stretch (polar residues) spans 975-1001 (GGRTEQGMSRSTSVTSQISNGSHMSYT).

The protein belongs to the protein kinase superfamily. STE Ser/Thr protein kinase family. STE20 subfamily. Self-associates. Interacts with MAP2K3. Interacts with SPRED1. Interacts with TESK1; the interaction inhibits TAOK1 kinase activity. Interacts with MAP3K7. Post-translationally, proteolytically processed by caspase-3 (CASP3). In terms of processing, autophosphorylated. Phosphorylated by ATM in response to DNA damage. Phosphorylated by LRRK2.

Its subcellular location is the cytoplasm. It carries out the reaction L-seryl-[protein] + ATP = O-phospho-L-seryl-[protein] + ADP + H(+). The catalysed reaction is L-threonyl-[protein] + ATP = O-phospho-L-threonyl-[protein] + ADP + H(+). With respect to regulation, serine/threonine-protein kinase activity is inhibited by SPRED1. In terms of biological role, serine/threonine-protein kinase involved in various processes such as p38/MAPK14 stress-activated MAPK cascade, DNA damage response and regulation of cytoskeleton stability. Phosphorylates MAP2K3, MAP2K6 and MARK2. Acts as an activator of the p38/MAPK14 stress-activated MAPK cascade by mediating phosphorylation and subsequent activation of the upstream MAP2K3 and MAP2K6 kinases. Involved in G-protein coupled receptor signaling to p38/MAPK14. In response to DNA damage, involved in the G2/M transition DNA damage checkpoint by activating the p38/MAPK14 stress-activated MAPK cascade, probably by mediating phosphorylation of MAP2K3 and MAP2K6. Acts as a regulator of cytoskeleton stability by phosphorylating 'Thr-208' of MARK2, leading to activate MARK2 kinase activity and subsequent phosphorylation and detachment of MAPT/TAU from microtubules. Also acts as a regulator of apoptosis: regulates apoptotic morphological changes, including cell contraction, membrane blebbing and apoptotic bodies formation via activation of the MAPK8/JNK cascade. During fetal development, it plays an essential role in the regulation of neuronal differentiation and migration to the cortical plate. The sequence is that of Serine/threonine-protein kinase TAO1 (Taok1) from Rattus norvegicus (Rat).